The sequence spans 110 residues: Hydrogenase maturation factor HypA (110 aa).

His2 contributes to the Ni(2+) binding site. Zn(2+) is bound by residues Cys70, Cys73, Cys86, and Cys89.

Belongs to the HypA/HybF family.

Functionally, involved in the maturation of [NiFe] hydrogenases. Required for nickel insertion into the metal center of the hydrogenase. The protein is Hydrogenase maturation factor HypA of Geobacter sp. (strain M21).